The following is a 649-amino-acid chain: Acetyl-coenzyme A synthetase (649 aa).

CoA contacts are provided by residues 191-194, Thr-309, and Asn-333; that span reads RGGR. ATP-binding positions include 385-387, 409-414, Asp-498, and Arg-513; these read GEP and DTWWQT. Residue Ser-521 participates in CoA binding. Arg-524 lines the ATP pocket. 3 residues coordinate Mg(2+): Val-535, His-537, and Val-540. Arg-582 serves as a coordination point for CoA. Residue Lys-607 is modified to N6-acetyllysine.

The protein belongs to the ATP-dependent AMP-binding enzyme family. Mg(2+) serves as cofactor. Acetylated. Deacetylation by the SIR2-homolog deacetylase activates the enzyme.

The catalysed reaction is acetate + ATP + CoA = acetyl-CoA + AMP + diphosphate. Its function is as follows. Catalyzes the conversion of acetate into acetyl-CoA (AcCoA), an essential intermediate at the junction of anabolic and catabolic pathways. AcsA undergoes a two-step reaction. In the first half reaction, AcsA combines acetate with ATP to form acetyl-adenylate (AcAMP) intermediate. In the second half reaction, it can then transfer the acetyl group from AcAMP to the sulfhydryl group of CoA, forming the product AcCoA. The chain is Acetyl-coenzyme A synthetase from Novosphingobium aromaticivorans (strain ATCC 700278 / DSM 12444 / CCUG 56034 / CIP 105152 / NBRC 16084 / F199).